A 523-amino-acid polypeptide reads, in one-letter code: 2-isopropylmalate synthase (523 aa).

The 263-residue stretch at 5 to 267 (VIIFDTTLRD…HTNINHHEIW (263 aa)) folds into the Pyruvate carboxyltransferase domain. Residues aspartate 14, histidine 202, histidine 204, and asparagine 238 each contribute to the Mn(2+) site. Positions 392-523 (RLDYFNVQSG…QNKENNKETV (132 aa)) are regulatory domain.

Belongs to the alpha-IPM synthase/homocitrate synthase family. LeuA type 1 subfamily. Homodimer. Mn(2+) is required as a cofactor.

It localises to the cytoplasm. The enzyme catalyses 3-methyl-2-oxobutanoate + acetyl-CoA + H2O = (2S)-2-isopropylmalate + CoA + H(+). It functions in the pathway amino-acid biosynthesis; L-leucine biosynthesis; L-leucine from 3-methyl-2-oxobutanoate: step 1/4. Catalyzes the condensation of the acetyl group of acetyl-CoA with 3-methyl-2-oxobutanoate (2-ketoisovalerate) to form 3-carboxy-3-hydroxy-4-methylpentanoate (2-isopropylmalate). In Klebsiella pneumoniae subsp. pneumoniae (strain ATCC 700721 / MGH 78578), this protein is 2-isopropylmalate synthase.